The following is a 587-amino-acid chain: Proteasome-associated ATPase (587 aa).

The stretch at 9–94 (ARKAQHDAEI…KEEVDRLAQP (86 aa)) forms a coiled coil. 276-281 (GCGKTL) contacts ATP. The tract at residues 586-587 (YL) is docks into pockets in the proteasome alpha-ring.

It belongs to the AAA ATPase family. Homohexamer. Assembles into a hexameric ring structure that caps the 20S proteasome core. Strongly interacts with the prokaryotic ubiquitin-like protein Pup through a hydrophobic interface; the interacting region of ARC lies in its N-terminal coiled-coil domain. There is one Pup binding site per ARC hexamer ring. Upon ATP-binding, the C-terminus of ARC interacts with the alpha-rings of the proteasome core, possibly by binding to the intersubunit pockets.

Its pathway is protein degradation; proteasomal Pup-dependent pathway. In terms of biological role, ATPase which is responsible for recognizing, binding, unfolding and translocation of pupylated proteins into the bacterial 20S proteasome core particle. May be essential for opening the gate of the 20S proteasome via an interaction with its C-terminus, thereby allowing substrate entry and access to the site of proteolysis. Thus, the C-termini of the proteasomal ATPase may function like a 'key in a lock' to induce gate opening and therefore regulate proteolysis. The sequence is that of Proteasome-associated ATPase from Thermomonospora curvata (strain ATCC 19995 / DSM 43183 / JCM 3096 / KCTC 9072 / NBRC 15933 / NCIMB 10081 / Henssen B9).